A 467-amino-acid chain; its full sequence is Venom prothrombin activator pseutarin-C catalytic subunit (467 aa).

Positions 1–22 (MAPQLLLCLILTFLWSLPEAES) are cleaved as a signal peptide. Residues 23–40 (NVFLKSKVANRFLQRTKR) constitute a propeptide that is removed on maturation. In terms of domain architecture, Gla spans 41 to 86 (ANSLVEEFKSGNIERECIEERCSKEEAREVFEDDEKTETFWNVYVD). 4-carboxyglutamate occurs at positions 46, 47, 54, 56, 59, 60, 65, 66, 69, and 72. Residues C57 and C62 are joined by a disulfide bond. The region spanning 86–122 (DGDQCSSNPCHYRGICKDGIGSYTCTCLSGYEGKNCE) is the EGF-like 1; calcium-binding domain. Intrachain disulfides connect C90–C101, C95–C110, C112–C121, C129–C140, C136–C149, C151–C164, C172–C329, C216–C221, C236–C252, C377–C391, and C402–C430. Residue S92 is glycosylated (O-linked (Hex...) serine). The region spanning 129 to 164 (CRVDNGNCWHFCKSVQNDIQCSCAEGYLLGEDGHSC) is the EGF-like 2 domain. Residues 182 to 209 (REASLPDFVQSHNATLLKKSDNPSPDIR) constitute a propeptide, activation peptide. Positions 210 to 454 (IVNGMDCKLG…FIPWIKRIMR (245 aa)) constitute a Peptidase S1 domain. H251 (charge relay system) is an active-site residue. N-linked (GlcNAc...) asparagine glycosylation is present at N254. D309 (charge relay system) is an active-site residue. S406 functions as the Charge relay system in the catalytic mechanism.

Belongs to the peptidase S1 family. Snake venom subfamily. Heterodimer of a light and a heavy chains; disulfide-linked. Is associated with pseutarin-C non-catalytic subunit (AC Q7SZN0) in a non-covalent manner. In terms of processing, gamma-carboxyglutamate residues are formed by vitamin K dependent carboxylation. These residues are essential for the binding of calcium. In terms of tissue distribution, expressed by the venom gland.

The protein resides in the secreted. The enzyme catalyses Selective cleavage of Arg-|-Thr and then Arg-|-Ile bonds in prothrombin to form thrombin.. Its activity is regulated as follows. Activated by calcium and negatively charged phospholipids. Its function is as follows. Snake prothrombin activator that attacks the hemostatic system of prey. This non-catalytic subunit is functionally similar to blood coagulation factor V. It serves as a critical cofactor for the prothrombinase activity of the catalytic subunit, which is similar to the blood coagulation factor X. The complex converts prothrombin to thrombin by sequential cleavage at two positions, Arg-320 followed by Arg-271. Cleavage at Arg-320 produces an active intermediate known as meizothrombin. Meizothrombin is the 'second' substrate for prothrombinase, and it docks in an altered manner to present the second cleavage site (271). Cleavage at Arg-271 releases active thrombin from its pro-fragment. This order of events is reversed if the protease component of prothrombinase is used on its own, suggesting that the 271 site is inherently more accessible to proteolysis. The complex converts prothrombin to thrombin in presence but also in the absence of membrane. In Pseudonaja textilis (Eastern brown snake), this protein is Venom prothrombin activator pseutarin-C catalytic subunit.